The primary structure comprises 264 residues: MRKWLYRLFIELTNHSLSSKLLASFAKSRLSGLLISSYAKIYHINQDEMEKSLKNYKTLQQLFVRRLKAGVRPVDADEHTVVSPVDAVIEDMGTIRENCEMIVKGKPYSIAEMLGSVEAAQPYVNGFFFILYLSPSHYHRIHSPISGVIEKQWALGRKSYPVNRLGLKYGRRPLEKNYRLITEVTAGGKRLAIVKIGAMFVNSIELTHEGEQLVKGEEMAYFSFGSTVVLLFERGSFAPDPRIVAPMPIKVGERLGYWCEAHER.

Active-site charge relay system; for autoendoproteolytic cleavage activity residues include Asp-86, His-142, and Ser-226. Ser-226 serves as the catalytic Schiff-base intermediate with substrate; via pyruvic acid; for decarboxylase activity. Ser-226 carries the pyruvic acid (Ser); by autocatalysis modification.

Belongs to the phosphatidylserine decarboxylase family. PSD-B subfamily. Prokaryotic type I sub-subfamily. Heterodimer of a large membrane-associated beta subunit and a small pyruvoyl-containing alpha subunit. It depends on pyruvate as a cofactor. Is synthesized initially as an inactive proenzyme. Formation of the active enzyme involves a self-maturation process in which the active site pyruvoyl group is generated from an internal serine residue via an autocatalytic post-translational modification. Two non-identical subunits are generated from the proenzyme in this reaction, and the pyruvate is formed at the N-terminus of the alpha chain, which is derived from the carboxyl end of the proenzyme. The autoendoproteolytic cleavage occurs by a canonical serine protease mechanism, in which the side chain hydroxyl group of the serine supplies its oxygen atom to form the C-terminus of the beta chain, while the remainder of the serine residue undergoes an oxidative deamination to produce ammonia and the pyruvoyl prosthetic group on the alpha chain. During this reaction, the Ser that is part of the protease active site of the proenzyme becomes the pyruvoyl prosthetic group, which constitutes an essential element of the active site of the mature decarboxylase.

The protein resides in the cell membrane. It carries out the reaction a 1,2-diacyl-sn-glycero-3-phospho-L-serine + H(+) = a 1,2-diacyl-sn-glycero-3-phosphoethanolamine + CO2. It participates in phospholipid metabolism; phosphatidylethanolamine biosynthesis; phosphatidylethanolamine from CDP-diacylglycerol: step 2/2. Catalyzes the formation of phosphatidylethanolamine (PtdEtn) from phosphatidylserine (PtdSer). This Geobacillus kaustophilus (strain HTA426) protein is Phosphatidylserine decarboxylase proenzyme.